The sequence spans 485 residues: Acyl transferase 1 (485 aa).

The active-site Proton acceptor is the His172.

This sequence belongs to the plant acyltransferase family. Highly expressed in young panicles. Expressed in leaf sheaths and panicles.

Functionally, involved in defense against pathogens. May contribute to disease resistance by potentiating disease resistance signaling, or producing phytoalexin-like secondary products. This Oryza sativa subsp. japonica (Rice) protein is Acyl transferase 1.